A 417-amino-acid chain; its full sequence is Tol-Pal system protein TolB (417 aa).

Residues 1–16 form the signal peptide; sequence MKYLWLFLIYAIGLFA.

It belongs to the TolB family. As to quaternary structure, the Tol-Pal system is composed of five core proteins: the inner membrane proteins TolA, TolQ and TolR, the periplasmic protein TolB and the outer membrane protein Pal. They form a network linking the inner and outer membranes and the peptidoglycan layer.

The protein resides in the periplasm. Functionally, part of the Tol-Pal system, which plays a role in outer membrane invagination during cell division and is important for maintaining outer membrane integrity. This Helicobacter pylori (strain J99 / ATCC 700824) (Campylobacter pylori J99) protein is Tol-Pal system protein TolB.